A 511-amino-acid polypeptide reads, in one-letter code: Apolipoprotein N-acyltransferase (511 aa).

The next 6 membrane-spanning stretches (helical) occupy residues 7–25 (PGWPGHLLALAAGALTPLA), 58–78 (GWWYGFGAFGAGTSWIYVSIH), 90–110 (FLMLGFTAGVAFFFALPAWLW), 125–145 (LAFAALWLALELFRSWFLTGF), 163–183 (VPVGGVWLSSFVIALSAALLV), and 192–212 (GASLLLALVLLLGPWAAGLYL). The CN hydrolase domain maps to 230–470 (IQGNIAQELK…QGILRGEVIP (241 aa)). The active-site Proton acceptor is Glu269. Residue Lys330 is part of the active site. The active-site Nucleophile is Cys382. Residues 478 to 498 (LQYRVWPLAGLAGVLLLWALL) form a helical membrane-spanning segment.

The protein belongs to the CN hydrolase family. Apolipoprotein N-acyltransferase subfamily.

The protein resides in the cell inner membrane. It catalyses the reaction N-terminal S-1,2-diacyl-sn-glyceryl-L-cysteinyl-[lipoprotein] + a glycerophospholipid = N-acyl-S-1,2-diacyl-sn-glyceryl-L-cysteinyl-[lipoprotein] + a 2-acyl-sn-glycero-3-phospholipid + H(+). The protein operates within protein modification; lipoprotein biosynthesis (N-acyl transfer). In terms of biological role, catalyzes the phospholipid dependent N-acylation of the N-terminal cysteine of apolipoprotein, the last step in lipoprotein maturation. The protein is Apolipoprotein N-acyltransferase of Pseudomonas paraeruginosa (strain DSM 24068 / PA7) (Pseudomonas aeruginosa (strain PA7)).